Here is a 300-residue protein sequence, read N- to C-terminus: 33 kDa chaperonin (300 aa).

2 cysteine pairs are disulfide-bonded: Cys247–Cys249 and Cys280–Cys283.

It belongs to the HSP33 family. Under oxidizing conditions two disulfide bonds are formed involving the reactive cysteines. Under reducing conditions zinc is bound to the reactive cysteines and the protein is inactive.

The protein resides in the cytoplasm. Redox regulated molecular chaperone. Protects both thermally unfolding and oxidatively damaged proteins from irreversible aggregation. Plays an important role in the bacterial defense system toward oxidative stress. This Prochlorococcus marinus (strain MIT 9312) protein is 33 kDa chaperonin.